The following is a 309-amino-acid chain: Succinate dehydrogenase [ubiquinone] iron-sulfur subunit 3, mitochondrial (309 aa).

The N-terminal 22 residues, 1–22, are a transit peptide targeting the mitochondrion; it reads MSSVLRLLGRRICNPAAEKVRL. In terms of domain architecture, 2Fe-2S ferredoxin-type spans 69–160; sequence FKIYRWNPDK…PTIITPLPHM (92 aa). Positions 120, 125, and 140 each coordinate [2Fe-2S] cluster. The 4Fe-4S ferredoxin-type domain maps to 202–232; that stretch reads DRKKLDGLYECILCACCTTSCPSYWWNPEEF. Residues C212, C215, and C218 each contribute to the [4Fe-4S] cluster site. Position 222 (C222) interacts with [3Fe-4S] cluster. Residue W227 coordinates a ubiquinone. C270 and C276 together coordinate [3Fe-4S] cluster. C280 provides a ligand contact to [4Fe-4S] cluster.

Belongs to the succinate dehydrogenase/fumarate reductase iron-sulfur protein family. Component of complex II composed of eight subunits in plants: four classical SDH subunits SDH1, SDH2, SDH3 and SDH4 (a flavoprotein (FP), an iron-sulfur protein (IP), and a cytochrome b composed of a large and a small subunit.), as well as four subunits unknown in mitochondria from bacteria and heterotrophic eukaryotes. [2Fe-2S] cluster serves as cofactor. It depends on [3Fe-4S] cluster as a cofactor. The cofactor is [4Fe-4S] cluster.

It localises to the mitochondrion inner membrane. The enzyme catalyses a quinone + succinate = fumarate + a quinol. The protein operates within carbohydrate metabolism; tricarboxylic acid cycle; fumarate from succinate (eukaryal route): step 1/1. In terms of biological role, iron-sulfur protein (IP) subunit of succinate dehydrogenase (SDH) that is involved in complex II of the mitochondrial electron transport chain and is responsible for transferring electrons from succinate to ubiquinone (coenzyme Q). The sequence is that of Succinate dehydrogenase [ubiquinone] iron-sulfur subunit 3, mitochondrial (SDH2-3) from Arabidopsis thaliana (Mouse-ear cress).